We begin with the raw amino-acid sequence, 362 residues long: tRNA-specific 2-thiouridylase MnmA 3 (362 aa).

ATP-binding positions include 11–18 (GMSGGIDS) and M37. C91 (nucleophile) is an active-site residue. A disulfide bond links C91 and C188. G115 contacts ATP. Residues 137–139 (KDQ) are interaction with tRNA. C188 (cysteine persulfide intermediate) is an active-site residue. Residues 296 to 297 (RY) are interaction with tRNA.

Belongs to the MnmA/TRMU family.

It is found in the cytoplasm. The catalysed reaction is S-sulfanyl-L-cysteinyl-[protein] + uridine(34) in tRNA + AH2 + ATP = 2-thiouridine(34) in tRNA + L-cysteinyl-[protein] + A + AMP + diphosphate + H(+). In terms of biological role, catalyzes the 2-thiolation of uridine at the wobble position (U34) of tRNA, leading to the formation of s(2)U34. This Bacteroides fragilis (strain YCH46) protein is tRNA-specific 2-thiouridylase MnmA 3.